The chain runs to 107 residues: ALRKVDRNRFVLDNVTPQPREAKRYKEEEEFPGHGRRRRRRSKGKGKAKGKGKGKGKRRRRRKGKGKGKGKKKGKGRRRRCRRGRGCKKRKGKKGKGRRRRRGKKGK.

2 stretches are compositionally biased toward basic and acidic residues: residues 1-10 and 20-33; these read ALRKVDRNRF and REAKRYKEEEEFPG. A propeptide spans 1–35 (removed in mature form); sequence ALRKVDRNRFVLDNVTPQPREAKRYKEEEEFPGHG. The segment at 1–107 is disordered; sequence ALRKVDRNRF…RRRRRGKKGK (107 aa). The span at 34–107 shows a compositional bias: basic residues; that stretch reads HGRRRRRRSK…RRRRRGKKGK (74 aa). At S42 the chain carries Phosphoserine.

A series of N-terminal cleavages yield the mature protein. Post-translationally, only the mature protein is phosphorylated. As to expression, gonads.

It localises to the nucleus. Its subcellular location is the chromosome. Protamines substitute for histones in the chromatin of sperm during the haploid phase of spermatogenesis. They compact sperm DNA into a highly condensed, stable and inactive complex. The polypeptide is Sperm protamine P1 (Bolinus brandaris (Purple dye murex)).